The following is a 423-amino-acid chain: Glucose-1-phosphate adenylyltransferase (423 aa).

Alpha-D-glucose 1-phosphate-binding positions include Y110, G175, 190–191 (EK), and S208.

This sequence belongs to the bacterial/plant glucose-1-phosphate adenylyltransferase family. In terms of assembly, homotetramer.

The enzyme catalyses alpha-D-glucose 1-phosphate + ATP + H(+) = ADP-alpha-D-glucose + diphosphate. Its pathway is glycan biosynthesis; glycogen biosynthesis. Involved in the biosynthesis of ADP-glucose, a building block required for the elongation reactions to produce glycogen. Catalyzes the reaction between ATP and alpha-D-glucose 1-phosphate (G1P) to produce pyrophosphate and ADP-Glc. The polypeptide is Glucose-1-phosphate adenylyltransferase (Nitrosococcus oceani (strain ATCC 19707 / BCRC 17464 / JCM 30415 / NCIMB 11848 / C-107)).